We begin with the raw amino-acid sequence, 372 residues long: F-box/kelch-repeat protein At2g44630 (372 aa).

Residues 1–13 (MSNADEPPQKTNQ) show a composition bias toward polar residues. The tract at residues 1 to 21 (MSNADEPPQKTNQPPSSSLTP) is disordered. The F-box domain maps to 21–67 (PPSLFSLPVDIVLNILALVPKRYYPILCCVSKSLRSLIRSPEIHKTR). 2 Kelch repeats span residues 136–181 (EIYC…LVGG) and 183–228 (IYVI…SVSL).

The polypeptide is F-box/kelch-repeat protein At2g44630 (Arabidopsis thaliana (Mouse-ear cress)).